A 165-amino-acid polypeptide reads, in one-letter code: UPF0254 protein MMP0935 (165 aa).

It belongs to the UPF0254 family.

This chain is UPF0254 protein MMP0935, found in Methanococcus maripaludis (strain DSM 14266 / JCM 13030 / NBRC 101832 / S2 / LL).